Consider the following 287-residue polypeptide: Protease HtpX (287 aa).

The next 2 membrane-spanning stretches (helical) occupy residues Val4 to Ile24 and Gly33 to Ile53. His139 provides a ligand contact to Zn(2+). Glu140 is a catalytic residue. His143 contributes to the Zn(2+) binding site. Helical transmembrane passes span Leu154–Ile174 and Gly195–Phe215. Position 220 (Glu220) interacts with Zn(2+).

It belongs to the peptidase M48B family. The cofactor is Zn(2+).

It localises to the cell inner membrane. The polypeptide is Protease HtpX (Shewanella denitrificans (strain OS217 / ATCC BAA-1090 / DSM 15013)).